Consider the following 447-residue polypeptide: Dirigent protein 10 (447 aa).

The first 21 residues, 1-21, serve as a signal peptide directing secretion; it reads MAGQKILSLLVIALVVTFAAA. Over residues 74-85 the composition is skewed to gly residues; sequence SGSTGSGLGAGT. The segment at 74–123 is disordered; that stretch reads SGSTGSGLGAGTGSIPSSGSGPGLLPTASSVPGSLAGGGSGSLPTTGSAT. The span at 86–107 shows a compositional bias: low complexity; that stretch reads GSIPSSGSGPGLLPTASSVPGS.

It belongs to the plant dirigent protein family. As to quaternary structure, homodimer. In terms of tissue distribution, in roots, mostly detected in root endodermis and quiescent center, and, to a lower extent, in root stele and cortex. Expressed in root vascular cylinder, flowers, siliques, cotyledon and leaf veins, and leaf margins. Present in the basal region of rosette leaf trichomes and in developing xylem.

It localises to the secreted. It is found in the extracellular space. The protein localises to the apoplast. Its function is as follows. Dirigent proteins impart stereoselectivity on the phenoxy radical-coupling reaction, yielding optically active lignans from two molecules of coniferyl alcohol in the biosynthesis of lignans, flavonolignans, and alkaloids and thus plays a central role in plant secondary metabolism. Regulates suberin accumulation in roots. This is Dirigent protein 10 (DIR10) from Arabidopsis thaliana (Mouse-ear cress).